The sequence spans 392 residues: Integrin-linked kinase-associated serine/threonine phosphatase 2C (392 aa).

Met1 bears the N-acetylmethionine mark. Residues 1-90 form a disordered region; the sequence is MDLFGDLPEP…TSEEEKNGSE (90 aa). Residue Ser13 is modified to Phosphoserine. Positions 56–70 are enriched in polar residues; that stretch reads SGDSGSLATSISQMV. The span at 72–90 shows a compositional bias: basic and acidic residues; that stretch reads TEGKGAKRKTSEEEKNGSE. Residues 108–390 form the PPM-type phosphatase domain; that stretch reads KGYVAERKGE…DNVTVMVVRI (283 aa). Mn(2+) contacts are provided by Asp152 and Gly153. Lys210 is modified (N6-acetyllysine). Positions 326 and 381 each coordinate Mn(2+).

Belongs to the PP2C family. Interacts with ILK. Specific association with ILK is independent of the catalytic activity of either partner. Mg(2+) serves as cofactor. Requires Mn(2+) as cofactor. In terms of tissue distribution, widely expressed. Highest levels expressed in striated muscle. Much lower levels evident in various smooth muscle tissues.

The protein resides in the cytoplasm. The enzyme catalyses O-phospho-L-seryl-[protein] + H2O = L-seryl-[protein] + phosphate. The catalysed reaction is O-phospho-L-threonyl-[protein] + H2O = L-threonyl-[protein] + phosphate. Inhibited rather than stimulated by magnesium. Functionally, protein phosphatase that may play a role in regulation of cell cycle progression via dephosphorylation of its substrates whose appropriate phosphorylation states might be crucial for cell proliferation. Selectively associates with integrin linked kinase (ILK), to modulate cell adhesion and growth factor signaling. Inhibits the ILK-GSK3B signaling axis and may play an important role in inhibiting oncogenic transformation. The polypeptide is Integrin-linked kinase-associated serine/threonine phosphatase 2C (ILKAP) (Homo sapiens (Human)).